The following is a 375-amino-acid chain: Chaperone protein DnaJ (375 aa).

The region spanning 5-70 (DYYEVLGVER…GKRSAYDQYG (66 aa)) is the J domain. The CR-type zinc-finger motif lies at 134 to 212 (GTTVTIRVPT…CHGQGRVEES (79 aa)). Cys147, Cys150, Cys164, Cys167, Cys186, Cys189, Cys200, and Cys203 together coordinate Zn(2+). 4 CXXCXGXG motif repeats span residues 147–154 (CKTCDGTG), 164–171 (CTTCGGIG), 186–193 (CPRCHGSG), and 200–207 (CGSCHGQG).

This sequence belongs to the DnaJ family. Homodimer. Zn(2+) serves as cofactor.

Its subcellular location is the cytoplasm. Participates actively in the response to hyperosmotic and heat shock by preventing the aggregation of stress-denatured proteins and by disaggregating proteins, also in an autonomous, DnaK-independent fashion. Unfolded proteins bind initially to DnaJ; upon interaction with the DnaJ-bound protein, DnaK hydrolyzes its bound ATP, resulting in the formation of a stable complex. GrpE releases ADP from DnaK; ATP binding to DnaK triggers the release of the substrate protein, thus completing the reaction cycle. Several rounds of ATP-dependent interactions between DnaJ, DnaK and GrpE are required for fully efficient folding. Also involved, together with DnaK and GrpE, in the DNA replication of plasmids through activation of initiation proteins. The sequence is that of Chaperone protein DnaJ from Ectopseudomonas mendocina (strain ymp) (Pseudomonas mendocina).